We begin with the raw amino-acid sequence, 282 residues long: Biotin synthase (282 aa).

The 228-residue stretch at 1 to 228 (MQEIFLCSIS…NARLMVAGGR (228 aa)) folds into the Radical SAM core domain. Positions 17, 21, and 24 each coordinate [4Fe-4S] cluster. The [2Fe-2S] cluster site is built by Cys-61, Cys-96, Cys-154, and Arg-221.

This sequence belongs to the radical SAM superfamily. Biotin synthase family. As to quaternary structure, homodimer. [4Fe-4S] cluster is required as a cofactor. [2Fe-2S] cluster serves as cofactor.

It carries out the reaction (4R,5S)-dethiobiotin + (sulfur carrier)-SH + 2 reduced [2Fe-2S]-[ferredoxin] + 2 S-adenosyl-L-methionine = (sulfur carrier)-H + biotin + 2 5'-deoxyadenosine + 2 L-methionine + 2 oxidized [2Fe-2S]-[ferredoxin]. The protein operates within cofactor biosynthesis; biotin biosynthesis; biotin from 7,8-diaminononanoate: step 2/2. In terms of biological role, catalyzes the conversion of dethiobiotin (DTB) to biotin by the insertion of a sulfur atom into dethiobiotin via a radical-based mechanism. This Helicobacter pylori (strain P12) protein is Biotin synthase.